The chain runs to 504 residues: Peptidyl-prolyl cis-trans isomerase CYP57 (504 aa).

S2 carries the post-translational modification N-acetylserine. In terms of domain architecture, PPIase cyclophilin-type spans 16–167 (IVNTTHGPID…DPAPKILSVE (152 aa)). Residues 204 to 274 (NLLSFGEEAE…AKKEAAQKDK (71 aa)) adopt a coiled-coil conformation. Basic and acidic residues-rich tracts occupy residues 237-275 (RLLKAEASDKERNASESKEVLSVREALNAKKEAAQKDKS), 344-354 (EDEKPRMEKLS), and 364-374 (AKAEHMEKGDT). 3 disordered regions span residues 237 to 374 (RLLK…KGDT), 416 to 441 (AKPFTSSNEPVVLTSSSEPVDNKEED), and 482 to 504 (EKFNRMQAKQKRREREWSGKSLA). Positions 416 to 434 (AKPFTSSNEPVVLTSSSEP) are enriched in polar residues. Basic and acidic residues predominate over residues 494-504 (REREWSGKSLA).

This sequence belongs to the cyclophilin-type PPIase family. As to expression, ubiquitous.

The protein resides in the nucleus. It is found in the cytoplasm. The enzyme catalyses [protein]-peptidylproline (omega=180) = [protein]-peptidylproline (omega=0). In terms of biological role, PPIases accelerate the folding of proteins. It catalyzes the cis-trans isomerization of proline imidic peptide bonds in oligopeptides. Involved in plant response to pathogen infection by increasing PAD4 expression in absence of EDS1 up-regulation. The sequence is that of Peptidyl-prolyl cis-trans isomerase CYP57 (CYP57) from Arabidopsis thaliana (Mouse-ear cress).